The sequence spans 906 residues: Disintegrin and metalloproteinase domain-containing protein 22 (906 aa).

The signal sequence occupies residues methionine 1–cysteine 25. A propeptide spanning residues glycine 26–arginine 222 is cleaved from the precursor. The N-linked (GlcNAc...) asparagine glycan is linked to asparagine 175. Topologically, residues serine 223–asparagine 736 are extracellular. The Peptidase M12B domain occupies lysine 239–proline 438. Cystine bridges form between cysteine 349–cysteine 433, cysteine 392–cysteine 417, cysteine 394–cysteine 401, cysteine 447–cysteine 477, cysteine 458–cysteine 474, cysteine 460–cysteine 466, cysteine 473–cysteine 494, cysteine 485–cysteine 491, cysteine 490–cysteine 516, cysteine 503–cysteine 523, cysteine 510–cysteine 542, cysteine 535–cysteine 547, cysteine 554–cysteine 605, cysteine 569–cysteine 635, cysteine 583–cysteine 593, cysteine 600–cysteine 663, and cysteine 657–cysteine 668. Residues proline 444–aspartate 531 form the Disintegrin domain. The N-linked (GlcNAc...) asparagine glycan is linked to asparagine 519. Asparagine 634 carries an N-linked (GlcNAc...) asparagine glycan. N-linked (GlcNAc...) asparagine glycosylation occurs at asparagine 675. An EGF-like domain is found at asparagine 675–asparagine 712. 3 disulfide bridges follow: cysteine 679–cysteine 694, cysteine 688–cysteine 700, and cysteine 702–cysteine 711. A helical transmembrane segment spans residues isoleucine 737–alanine 757. The Cytoplasmic portion of the chain corresponds to tryptophan 758–isoleucine 906. Residues tyrosine 785 to isoleucine 906 form a disordered region. The segment covering serine 793–serine 810 has biased composition (low complexity). Serine 810 carries the post-translational modification Phosphoserine. Positions tryptophan 811–arginine 829 are enriched in basic and acidic residues. Position 834 is a phosphoserine (serine 834). The segment covering asparagine 842–proline 853 has biased composition (basic residues). 4 positions are modified to phosphoserine: serine 857, serine 862, serine 866, and serine 870. The segment covering serine 862 to serine 877 has biased composition (low complexity).

As to quaternary structure, interacts with LGI1. Interacts with DLG4/PSD95. Also binds LGI4. Interacts with KCNA2 and DLG2. Interacts with ADAM11. Interacts (via C-terminus) with YWHAB/14-3-3 beta. Interacts (via C-terminus) with YWHAZ/14-3-3 zeta. The precursor is cleaved by a furin endopeptidase. Highly expressed in the brain and in some high-grade but not low-grade gliomas. Detected slightly or not at all in other tissues.

It is found in the cell membrane. The protein resides in the cell projection. Its subcellular location is the axon. Functionally, probable ligand for integrin in the brain. This is a non catalytic metalloprotease-like protein. Involved in regulation of cell adhesion and spreading and in inhibition of cell proliferation. Neuronal receptor for LGI1. This chain is Disintegrin and metalloproteinase domain-containing protein 22 (ADAM22), found in Homo sapiens (Human).